A 596-amino-acid chain; its full sequence is ATP-dependent RNA helicase dbp3 (596 aa).

A compositionally biased stretch (basic and acidic residues) spans 1 to 17; the sequence is MPKRTLEDTELNPRDNY. Disordered regions lie at residues 1-87 and 115-139; these read MPKR…ESTS and EEKVDIPESTDSATPISVAPQQNGT. A compositionally biased stretch (basic residues) spans 21–30; sequence SSKKSRKEKR. Positions 47–120 form a coiled coil; the sequence is IDIEVESKEA…KEGKEEKVDI (74 aa). Residues 123-139 are compositionally biased toward polar residues; it reads STDSATPISVAPQQNGT. The short motif at 180–207 is the Q motif element; the sequence is IKFDYLPITDSAQRAPFKDFKAPTPIQA. The 177-residue stretch at 210-386 folds into the Helicase ATP-binding domain; sequence WPFLLAGRDV…STFMTSPVKI (177 aa). Residue 223-230 participates in ATP binding; the sequence is AETGSGKT. The DEAD box signature appears at 332-335; sequence DEAD. In terms of domain architecture, Helicase C-terminal spans 417–566; that stretch reads RLMQLLKQYQ…PVPDELLKFG (150 aa).

Belongs to the DEAD box helicase family. DDX5/DBP2 subfamily.

It is found in the nucleus. Its subcellular location is the nucleolus. It carries out the reaction ATP + H2O = ADP + phosphate + H(+). ATP-dependent RNA helicase required for 60S ribosomal subunit synthesis. Involved in efficient pre-rRNA processing, predominantly at site A3, which is necessary for the normal formation of 25S and 5.8S rRNAs. The protein is ATP-dependent RNA helicase dbp3 (dbp3) of Sclerotinia sclerotiorum (strain ATCC 18683 / 1980 / Ss-1) (White mold).